Reading from the N-terminus, the 406-residue chain is Succinylornithine transaminase (406 aa).

Lysine 252 carries the N6-(pyridoxal phosphate)lysine modification.

It belongs to the class-III pyridoxal-phosphate-dependent aminotransferase family. AstC subfamily. The cofactor is pyridoxal 5'-phosphate.

It catalyses the reaction N(2)-succinyl-L-ornithine + 2-oxoglutarate = N-succinyl-L-glutamate 5-semialdehyde + L-glutamate. Its pathway is amino-acid degradation; L-arginine degradation via AST pathway; L-glutamate and succinate from L-arginine: step 3/5. Its function is as follows. Catalyzes the transamination of N(2)-succinylornithine and alpha-ketoglutarate into N(2)-succinylglutamate semialdehyde and glutamate. Can also act as an acetylornithine aminotransferase. The chain is Succinylornithine transaminase from Escherichia coli O157:H7.